The primary structure comprises 337 residues: Protein RecA (337 aa).

66–73 provides a ligand contact to ATP; it reads GPESSGKT.

Belongs to the RecA family.

The protein localises to the cytoplasm. Functionally, can catalyze the hydrolysis of ATP in the presence of single-stranded DNA, the ATP-dependent uptake of single-stranded DNA by duplex DNA, and the ATP-dependent hybridization of homologous single-stranded DNAs. It interacts with LexA causing its activation and leading to its autocatalytic cleavage. This chain is Protein RecA, found in Mesomycoplasma hyopneumoniae (strain 232) (Mycoplasma hyopneumoniae).